The primary structure comprises 380 residues: Queuine tRNA-ribosyltransferase (380 aa).

Residue D96 is the Proton acceptor of the active site. Substrate contacts are provided by residues 96-100 (DSGGF), D150, Q193, and G220. Residues 251–257 (GVGAPDS) are RNA binding. The active-site Nucleophile is D270. The segment at 275 to 279 (TRIAR) is RNA binding; important for wobble base 34 recognition. Positions 308, 310, 313, and 339 each coordinate Zn(2+).

The protein belongs to the queuine tRNA-ribosyltransferase family. In terms of assembly, homodimer. Within each dimer, one monomer is responsible for RNA recognition and catalysis, while the other monomer binds to the replacement base PreQ1. Requires Zn(2+) as cofactor.

The catalysed reaction is 7-aminomethyl-7-carbaguanine + guanosine(34) in tRNA = 7-aminomethyl-7-carbaguanosine(34) in tRNA + guanine. It participates in tRNA modification; tRNA-queuosine biosynthesis. Catalyzes the base-exchange of a guanine (G) residue with the queuine precursor 7-aminomethyl-7-deazaguanine (PreQ1) at position 34 (anticodon wobble position) in tRNAs with GU(N) anticodons (tRNA-Asp, -Asn, -His and -Tyr). Catalysis occurs through a double-displacement mechanism. The nucleophile active site attacks the C1' of nucleotide 34 to detach the guanine base from the RNA, forming a covalent enzyme-RNA intermediate. The proton acceptor active site deprotonates the incoming PreQ1, allowing a nucleophilic attack on the C1' of the ribose to form the product. After dissociation, two additional enzymatic reactions on the tRNA convert PreQ1 to queuine (Q), resulting in the hypermodified nucleoside queuosine (7-(((4,5-cis-dihydroxy-2-cyclopenten-1-yl)amino)methyl)-7-deazaguanosine). This is Queuine tRNA-ribosyltransferase from Streptococcus thermophilus (strain ATCC BAA-491 / LMD-9).